The primary structure comprises 500 residues: Transcription factor-like 5 protein (500 aa).

Composition is skewed to pro residues over residues 1-12 and 196-210; these read MSGPGPREPPPE and AEPPPAPRGPEPPEP. Disordered regions lie at residues 1-34 and 191-211; these read MSGPGPREPPPEAGAAGGEAAVEGAGGGDAALGE and FNSIPAEPPPAPRGPEPPEPG. Positions 347–356 are R3 epitope (recognized by Chagas's antibodies); sequence MRQLDTNVER. Residues 365 to 410 form a disordered region; it reads VGEGATATQGAWQSSESSQANLGEQAQSGPQGGRSQRRERHNRMER. Residues 370–393 are compositionally biased toward polar residues; it reads TATQGAWQSSESSQANLGEQAQSG. A bHLH domain is found at 400 to 450; sequence QRRERHNRMERDRRRRIRICCDELNLLVPFCNAETDKATTLQWTTAFLKYI. The R1 epitope (recognized by Chagas's antibodies) stretch occupies residues 481–500; sequence SLVTCPAQGSLQSSPSMEIK.

In terms of assembly, efficient DNA binding requires dimerization with another bHLH protein. Isoform 3 is testis specific. Isoform 2 is pancreas specific.

The protein localises to the nucleus. In terms of biological role, putative transcription factor. Isoform 3 may play a role in early spermatogenesis. This Homo sapiens (Human) protein is Transcription factor-like 5 protein (TCFL5).